A 312-amino-acid polypeptide reads, in one-letter code: Glyoxylate/hydroxypyruvate reductase A (312 aa).

R227 is an active-site residue. The active-site Proton donor is H275.

This sequence belongs to the D-isomer specific 2-hydroxyacid dehydrogenase family. GhrA subfamily.

The protein localises to the cytoplasm. The catalysed reaction is glycolate + NADP(+) = glyoxylate + NADPH + H(+). It catalyses the reaction (R)-glycerate + NAD(+) = 3-hydroxypyruvate + NADH + H(+). It carries out the reaction (R)-glycerate + NADP(+) = 3-hydroxypyruvate + NADPH + H(+). In terms of biological role, catalyzes the NADPH-dependent reduction of glyoxylate and hydroxypyruvate into glycolate and glycerate, respectively. The protein is Glyoxylate/hydroxypyruvate reductase A of Escherichia fergusonii (strain ATCC 35469 / DSM 13698 / CCUG 18766 / IAM 14443 / JCM 21226 / LMG 7866 / NBRC 102419 / NCTC 12128 / CDC 0568-73).